Consider the following 550-residue polypeptide: Hydroxylamine reductase (550 aa).

[2Fe-2S] cluster-binding residues include C3, C6, C18, and C25. Hybrid [4Fe-2O-2S] cluster is bound by residues H249, E273, C317, C405, C433, C458, E492, and K494. At C405 the chain carries Cysteine persulfide.

This sequence belongs to the HCP family. It depends on [2Fe-2S] cluster as a cofactor. The cofactor is hybrid [4Fe-2O-2S] cluster.

Its subcellular location is the cytoplasm. The enzyme catalyses A + NH4(+) + H2O = hydroxylamine + AH2 + H(+). Its function is as follows. Catalyzes the reduction of hydroxylamine to form NH(3) and H(2)O. The sequence is that of Hydroxylamine reductase from Salmonella schwarzengrund (strain CVM19633).